The chain runs to 159 residues: 2-C-methyl-D-erythritol 2,4-cyclodiphosphate synthase (159 aa).

Residues aspartate 8 and histidine 10 each contribute to the a divalent metal cation site. 4-CDP-2-C-methyl-D-erythritol 2-phosphate-binding positions include 8–10 (DVH) and 34–35 (HS). An a divalent metal cation-binding site is contributed by histidine 42. Residues 56-58 (DIG), 61-65 (FPDTD), 100-106 (AQAPKML), 132-135 (TTTE), phenylalanine 139, and arginine 142 each bind 4-CDP-2-C-methyl-D-erythritol 2-phosphate.

The protein belongs to the IspF family. In terms of assembly, homotrimer. It depends on a divalent metal cation as a cofactor.

The enzyme catalyses 4-CDP-2-C-methyl-D-erythritol 2-phosphate = 2-C-methyl-D-erythritol 2,4-cyclic diphosphate + CMP. It functions in the pathway isoprenoid biosynthesis; isopentenyl diphosphate biosynthesis via DXP pathway; isopentenyl diphosphate from 1-deoxy-D-xylulose 5-phosphate: step 4/6. Functionally, involved in the biosynthesis of isopentenyl diphosphate (IPP) and dimethylallyl diphosphate (DMAPP), two major building blocks of isoprenoid compounds. Catalyzes the conversion of 4-diphosphocytidyl-2-C-methyl-D-erythritol 2-phosphate (CDP-ME2P) to 2-C-methyl-D-erythritol 2,4-cyclodiphosphate (ME-CPP) with a corresponding release of cytidine 5-monophosphate (CMP). This Salmonella arizonae (strain ATCC BAA-731 / CDC346-86 / RSK2980) protein is 2-C-methyl-D-erythritol 2,4-cyclodiphosphate synthase.